Consider the following 313-residue polypeptide: MENRSLVTIAEHSKEKILYMLEMAKQFEMNPNRRLLQGKVVATLFFEPSTRTRLSFETAANRLGARVIGFTDPKATSSSKGETLKDTIMMVSSYADIIVMRHYLEGAARYASEVAPVPIVNAGDGANQHPSQTMLDLYSIYKTQGTLENLNIFLVGDLKYGRTVHSLLMAMRHFNPTFHFIAPDELKMPEEYKLYCKEHQIKYIEHTEFTEEIIADADILYMTRVQRERFTDLMEYERVKNVYILRNKMLENTRPNLRILHPLPRVNEIAYDVDNNPKAYYFQQAQNGLYAREAILCDVLGITLEDVKNDILL.

2 residues coordinate carbamoyl phosphate: Arg-51 and Thr-52. An L-aspartate-binding site is contributed by Lys-80. Positions 101, 129, and 132 each coordinate carbamoyl phosphate. The L-aspartate site is built by Arg-162 and Arg-224. The carbamoyl phosphate site is built by Leu-263 and Pro-264.

The protein belongs to the aspartate/ornithine carbamoyltransferase superfamily. ATCase family. Heterododecamer (2C3:3R2) of six catalytic PyrB chains organized as two trimers (C3), and six regulatory PyrI chains organized as three dimers (R2).

It carries out the reaction carbamoyl phosphate + L-aspartate = N-carbamoyl-L-aspartate + phosphate + H(+). It functions in the pathway pyrimidine metabolism; UMP biosynthesis via de novo pathway; (S)-dihydroorotate from bicarbonate: step 2/3. Catalyzes the condensation of carbamoyl phosphate and aspartate to form carbamoyl aspartate and inorganic phosphate, the committed step in the de novo pyrimidine nucleotide biosynthesis pathway. This is Aspartate carbamoyltransferase catalytic subunit from Bacteroides thetaiotaomicron (strain ATCC 29148 / DSM 2079 / JCM 5827 / CCUG 10774 / NCTC 10582 / VPI-5482 / E50).